The following is a 214-amino-acid chain: Thymidylate kinase (214 aa).

Residue 13–20 (GPDACGKS) coordinates ATP.

This sequence belongs to the thymidylate kinase family.

It catalyses the reaction dTMP + ATP = dTDP + ADP. In terms of biological role, phosphorylation of dTMP to form dTDP in both de novo and salvage pathways of dTTP synthesis. The sequence is that of Thymidylate kinase from Malacoplasma penetrans (strain HF-2) (Mycoplasma penetrans).